A 344-amino-acid chain; its full sequence is Ferrochelatase (344 aa).

2 residues coordinate Fe cation: histidine 214 and glutamate 295.

The protein belongs to the ferrochelatase family.

Its subcellular location is the cytoplasm. It catalyses the reaction heme b + 2 H(+) = protoporphyrin IX + Fe(2+). It functions in the pathway porphyrin-containing compound metabolism; protoheme biosynthesis; protoheme from protoporphyrin-IX: step 1/1. Functionally, catalyzes the ferrous insertion into protoporphyrin IX. The chain is Ferrochelatase from Agrobacterium fabrum (strain C58 / ATCC 33970) (Agrobacterium tumefaciens (strain C58)).